The primary structure comprises 90 residues: Probable Fe(2+)-trafficking protein (90 aa).

This sequence belongs to the Fe(2+)-trafficking protein family.

Functionally, could be a mediator in iron transactions between iron acquisition and iron-requiring processes, such as synthesis and/or repair of Fe-S clusters in biosynthetic enzymes. This is Probable Fe(2+)-trafficking protein from Albidiferax ferrireducens (strain ATCC BAA-621 / DSM 15236 / T118) (Rhodoferax ferrireducens).